The primary structure comprises 2631 residues: Cyclic GMP-binding protein C (2631 aa).

LRR repeat units lie at residues 170-194, 196-217, 218-240, 242-262, 263-285, and 287-308; these read TAQI…IFSL, WIQK…IGKL, QQLQ…IGDL, NLKR…LERL, SKLE…IASL, and SLKT…VVSK. The Roc domain occupies 323-515; it reads GARPCLRSKL…QLIEDIIKTQ (193 aa). Residues 336 to 343, 402 to 406, and 458 to 461 contribute to the GTP site; these read GDPGVGKT, DIANQ, and THID. In terms of domain architecture, COR spans 523-741; sequence PSSFFTLEEA…ESCQKRAVIL (219 aa). Residues 878 to 1172 form the Protein kinase domain; that stretch reads VKINKEVGRG…KKKFAPLPFT (295 aa). ATP contacts are provided by residues 884–892 and K905; that span reads VGRGAFGIV. D1023 serves as the catalytic Proton acceptor. Polar residues predominate over residues 1225 to 1250; that stretch reads ISLTSSGTSPTNSPVGGLLSQSLTQP. Disordered stretches follow at residues 1225–1263 and 1387–1418; these read ISLT…ILST and SSAT…RNSV. Positions 1251–1263 are enriched in low complexity; sequence ITSGGSTSGILST. In terms of domain architecture, N-terminal Ras-GEF spans 1366-1539; that stretch reads SVSIIIAATM…QIYGTLTTHE (174 aa). Residues 1392–1404 are compositionally biased toward basic and acidic residues; sequence KSEHISTRRRSDT. In terms of domain architecture, DEP spans 1620–1706; it reads PLLGITVKEK…SPTSFYMFLE (87 aa). Positions 1708-1971 constitute a Ras-GEF domain; sequence DPELIARQYT…DLKALDSLQI (264 aa). The interval 1989–2013 is disordered; sequence GTTNDDKEKGDENGGGLTSSNFFGN. 2014–2133 is an a nucleoside 3',5'-cyclic phosphate binding site; the sequence is GSDELTERDW…AKFYKIMANQ (120 aa). Disordered regions lie at residues 2142–2180, 2192–2239, and 2263–2346; these read PWSK…GGGL, MSLS…TTTD, and SANL…GQQP. Residues 2144-2174 show a composition bias toward low complexity; sequence SKPKNTTGGSSSSNQSAGPDNILGTTPTGIS. The segment covering 2212–2221 has biased composition (pro residues); the sequence is LPSPPAPLQS. The segment covering 2222-2238 has biased composition (low complexity); the sequence is PPTSGISSPTTTTSTTT. Over residues 2287–2299 the composition is skewed to basic and acidic residues; sequence TINKDPHQRDSGS. A compositionally biased stretch (polar residues) spans 2321–2336; that stretch reads GSISYLGRTQTSTSPL. The 61-residue stretch at 2354–2414 folds into the GRAM domain; sequence EFCQRFALVD…KNIDKLICIN (61 aa). Position 2490 to 2616 (2490 to 2616) interacts with a nucleoside 3',5'-cyclic phosphate; that stretch reads GDELTKEDWE…ASKWFKYLAT (127 aa).

This sequence belongs to the protein kinase superfamily. TKL Ser/Thr protein kinase family. ROCO subfamily.

The catalysed reaction is L-seryl-[protein] + ATP = O-phospho-L-seryl-[protein] + ADP + H(+). It carries out the reaction L-threonyl-[protein] + ATP = O-phospho-L-threonyl-[protein] + ADP + H(+). In terms of biological role, promotes the exchange of Ras-bound GDP by GTP. Required for cyclic GMP-mediated chemotaxis, polarity. Plays a key role in cyclic AMP-induced myosin II translocation to the cortex. Also involved in the phosphorylation of mlkA and mlcR, either directly or via an intermediate kinase. This chain is Cyclic GMP-binding protein C (gbpC), found in Dictyostelium discoideum (Social amoeba).